The primary structure comprises 431 residues: C4-dicarboxylate transport protein (431 aa).

8 helical membrane passes run 8 to 28 (ILYV…HFWP), 44 to 64 (LIKM…IAGM), 78 to 98 (LLYF…AAHL), 148 to 168 (GDIL…AAIG), 188 to 208 (IVHV…AFTI), 222 to 242 (LIGT…GAIA), 307 to 327 (IYMT…LTLL), and 355 to 375 (AATL…ILGI).

Belongs to the dicarboxylate/amino acid:cation symporter (DAACS) (TC 2.A.23) family.

The protein localises to the cell inner membrane. Its function is as follows. Responsible for the transport of dicarboxylates such as succinate, fumarate, and malate from the periplasm across the membrane. The sequence is that of C4-dicarboxylate transport protein from Cupriavidus pinatubonensis (strain JMP 134 / LMG 1197) (Cupriavidus necator (strain JMP 134)).